The primary structure comprises 295 residues: ATP synthase gamma chain (295 aa).

Belongs to the ATPase gamma chain family. F-type ATPases have 2 components, CF(1) - the catalytic core - and CF(0) - the membrane proton channel. CF(1) has five subunits: alpha(3), beta(3), gamma(1), delta(1), epsilon(1). CF(0) has three main subunits: a, b and c.

Its subcellular location is the cell inner membrane. Its function is as follows. Produces ATP from ADP in the presence of a proton gradient across the membrane. The gamma chain is believed to be important in regulating ATPase activity and the flow of protons through the CF(0) complex. This chain is ATP synthase gamma chain, found in Campylobacter fetus subsp. fetus (strain 82-40).